The following is a 270-amino-acid chain: Surfeit locus protein 4 homolog (270 aa).

6 helical membrane-spanning segments follow: residues 65 to 85, 93 to 113, 115 to 135, 178 to 198, 206 to 226, and 243 to 263; these read FLATVFVLVNLLGQLGGCGMV, IAVGLLFFIVVLQTVAYSILW, FQFLLRNFALIGALLLVLAEA, LSVWQVIQDIIGSILMVLVVL, ALILVALLTILNLYHNAWWTI, and TLSVIGGLLMIVSLGPGGVSM. Residues 267 to 270 carry the Di-lysine motif motif; the sequence is KKKW.

The protein belongs to the SURF4 family.

Its subcellular location is the endoplasmic reticulum membrane. Its function is as follows. Endoplasmic reticulum cargo receptor that mediates the export of lipoproteins by recruiting cargos into COPII vesicles to facilitate their secretion. The chain is Surfeit locus protein 4 homolog from Drosophila melanogaster (Fruit fly).